The sequence spans 384 residues: Cysteine desulfurase (384 aa).

Pyridoxal 5'-phosphate-binding positions include 74–75 (GT), Asn-154, Gln-180, and 200–202 (SGH). N6-(pyridoxal phosphate)lysine is present on Lys-203. Pyridoxal 5'-phosphate is bound at residue Thr-238. Cys-325 (cysteine persulfide intermediate) is an active-site residue. Cys-325 contacts [2Fe-2S] cluster.

It belongs to the class-V pyridoxal-phosphate-dependent aminotransferase family. NifS/IscS subfamily. As to quaternary structure, homodimer. It depends on pyridoxal 5'-phosphate as a cofactor.

The enzyme catalyses (sulfur carrier)-H + L-cysteine = (sulfur carrier)-SH + L-alanine. In terms of biological role, catalyzes the removal of elemental sulfur atoms from cysteine to produce alanine. Seems to participate in the biosynthesis of the nitrogenase metalloclusters by providing the inorganic sulfur required for the Fe-S core formation. The sequence is that of Cysteine desulfurase from Rhodobacter capsulatus (Rhodopseudomonas capsulata).